The chain runs to 987 residues: Probable outer membrane protein PmpG (987 aa).

The signal sequence occupies residues 1 to 25; that stretch reads MMQTPFHKFFLLAMLSYSLLQGGHA. Positions 707–987 constitute an Autotransporter domain; the sequence is GRAYCRGIWI…GLSIGSKIRF (281 aa).

It belongs to the PMP outer membrane protein family.

Its subcellular location is the secreted. The protein localises to the cell wall. It localises to the cell outer membrane. This chain is Probable outer membrane protein PmpG (pmpG), found in Chlamydia muridarum (strain MoPn / Nigg).